The chain runs to 607 residues: UvrABC system protein C (607 aa).

Residues Asp12 to Ile91 enclose the GIY-YIG domain. One can recognise a UVR domain in the interval Glu200 to Ile235.

Belongs to the UvrC family. Interacts with UvrB in an incision complex.

The protein resides in the cytoplasm. The UvrABC repair system catalyzes the recognition and processing of DNA lesions. UvrC both incises the 5' and 3' sides of the lesion. The N-terminal half is responsible for the 3' incision and the C-terminal half is responsible for the 5' incision. The polypeptide is UvrABC system protein C (Carboxydothermus hydrogenoformans (strain ATCC BAA-161 / DSM 6008 / Z-2901)).